The chain runs to 256 residues: GTP cyclohydrolase FolE2 (256 aa).

The protein belongs to the GTP cyclohydrolase IV family.

It carries out the reaction GTP + H2O = 7,8-dihydroneopterin 3'-triphosphate + formate + H(+). It functions in the pathway cofactor biosynthesis; 7,8-dihydroneopterin triphosphate biosynthesis; 7,8-dihydroneopterin triphosphate from GTP: step 1/1. Its function is as follows. Converts GTP to 7,8-dihydroneopterin triphosphate. The protein is GTP cyclohydrolase FolE2 of Caldicellulosiruptor bescii (strain ATCC BAA-1888 / DSM 6725 / KCTC 15123 / Z-1320) (Anaerocellum thermophilum).